Here is a 110-residue protein sequence, read N- to C-terminus: Phosphoribosyl-AMP cyclohydrolase (110 aa).

Asp-74 is a Mg(2+) binding site. Residue Cys-75 coordinates Zn(2+). Mg(2+)-binding residues include Asp-76 and Asp-78. Cys-91 and Cys-98 together coordinate Zn(2+).

The protein belongs to the PRA-CH family. As to quaternary structure, homodimer. Requires Mg(2+) as cofactor. The cofactor is Zn(2+).

It is found in the cytoplasm. The catalysed reaction is 1-(5-phospho-beta-D-ribosyl)-5'-AMP + H2O = 1-(5-phospho-beta-D-ribosyl)-5-[(5-phospho-beta-D-ribosylamino)methylideneamino]imidazole-4-carboxamide. It participates in amino-acid biosynthesis; L-histidine biosynthesis; L-histidine from 5-phospho-alpha-D-ribose 1-diphosphate: step 3/9. In terms of biological role, catalyzes the hydrolysis of the adenine ring of phosphoribosyl-AMP. This is Phosphoribosyl-AMP cyclohydrolase from Lacticaseibacillus casei (strain BL23) (Lactobacillus casei).